Reading from the N-terminus, the 113-residue chain is Large ribosomal subunit protein uL22 (113 aa).

Belongs to the universal ribosomal protein uL22 family. Part of the 50S ribosomal subunit.

Functionally, this protein binds specifically to 23S rRNA; its binding is stimulated by other ribosomal proteins, e.g. L4, L17, and L20. It is important during the early stages of 50S assembly. It makes multiple contacts with different domains of the 23S rRNA in the assembled 50S subunit and ribosome. Its function is as follows. The globular domain of the protein is located near the polypeptide exit tunnel on the outside of the subunit, while an extended beta-hairpin is found that lines the wall of the exit tunnel in the center of the 70S ribosome. In Xanthomonas axonopodis pv. citri (strain 306), this protein is Large ribosomal subunit protein uL22.